A 140-amino-acid polypeptide reads, in one-letter code: Gastrula zinc finger protein XlCGF49.1 (140 aa).

5 C2H2-type zinc fingers span residues 6–28 (FTCMECSKSFSQKSNLQTHYKIH), 34–56 (FTCMECGRTFSQKSTLLSHYKMH), 62–84 (FSCSECGKSFSHKNKLTLHQKIH), 90–112 (YACTECGKRFPEKSKLKIHWKIH), and 118–140 (FSCTECGKKFSRESNLYFHQKMH).

The protein belongs to the krueppel C2H2-type zinc-finger protein family.

The protein resides in the nucleus. In terms of biological role, may be involved in transcriptional regulation. In Xenopus laevis (African clawed frog), this protein is Gastrula zinc finger protein XlCGF49.1.